The chain runs to 491 residues: Probable cytosol aminopeptidase (491 aa).

Mn(2+) contacts are provided by Lys261 and Asp266. Lys273 is an active-site residue. Asp284, Asp343, and Glu345 together coordinate Mn(2+). Residue Arg347 is part of the active site.

Belongs to the peptidase M17 family. Requires Mn(2+) as cofactor.

It is found in the cytoplasm. It carries out the reaction Release of an N-terminal amino acid, Xaa-|-Yaa-, in which Xaa is preferably Leu, but may be other amino acids including Pro although not Arg or Lys, and Yaa may be Pro. Amino acid amides and methyl esters are also readily hydrolyzed, but rates on arylamides are exceedingly low.. The enzyme catalyses Release of an N-terminal amino acid, preferentially leucine, but not glutamic or aspartic acids.. Functionally, presumably involved in the processing and regular turnover of intracellular proteins. Catalyzes the removal of unsubstituted N-terminal amino acids from various peptides. The sequence is that of Probable cytosol aminopeptidase from Stenotrophomonas maltophilia (strain K279a).